Here is a 396-residue protein sequence, read N- to C-terminus: Calsequestrin-1 (396 aa).

An N-terminal signal peptide occupies residues 1-34 (MSATDRMGPRAVPGLRLALLLLLVLGTPKSGVQG). At Y43 the chain carries Phosphotyrosine. S81 is modified (phosphoserine). T124 is subject to Phosphothreonine. The residue at position 216 (S216) is a Phosphoserine. N-linked (GlcNAc...) asparagine glycosylation occurs at N350.

This sequence belongs to the calsequestrin family. As to quaternary structure, monomer; increases in response to a depletion of intracellular calcium. Homodimer. Homotetramer and homopolymer. Can form linear homooligomers. Ca(2+) ions promote oligomerization. Interacts (via C-terminal end and preferentially with the monomeric form) with STIM1; this interaction increases in response to a depletion of intracellular calcium, decreases both STIM1 aggregation and clustering, interaction of STIM1 with ORAI1 and store-operated Ca(2+) entry (SOCE) activity. Interacts with ASPH and TRDN. Post-translationally, N-glycosylated. As to expression, expressed in myoblasts (at protein level).

The protein localises to the endoplasmic reticulum. It localises to the sarcoplasmic reticulum. It is found in the sarcoplasmic reticulum lumen. Its subcellular location is the sarcoplasmic reticulum membrane. The protein resides in the mitochondrion matrix. In terms of biological role, calsequestrin is a high-capacity, moderate affinity, calcium-binding protein and thus acts as an internal calcium store in muscle. Calcium ions are bound by clusters of acidic residues at the protein surface, often at the interface between subunits. Can bind around 80 Ca(2+) ions. Regulates the release of lumenal Ca(2+) via the calcium release channel RYR1; this plays an important role in triggering muscle contraction. Negatively regulates store-operated Ca(2+) entry (SOCE) activity. The protein is Calsequestrin-1 (CASQ1) of Homo sapiens (Human).